Reading from the N-terminus, the 405-residue chain is Scramblase ANY1 (405 aa).

The Cytoplasmic segment spans residues 1–51 (MSTTGPLDATLIRDVAVATATKASYDMSDTLYSYLPKVDQFYIPEWLTMQF). Residues 52–72 (IANNLISFTPLFSYGTTIISI) form a helical membrane-spanning segment. Residues 73 to 76 (EKCK) lie on the Lumenal side of the membrane. The chain crosses the membrane as a helical span at residues 77 to 97 (TALGFSIDICATMLIASILRI). Over 98-103 (SYYLIT) the chain is Cytoplasmic. A helical membrane pass occupies residues 104–124 (PYEITLLRQSLVMIFIQLILL). Residues 125–177 (RTSLKYRPDEYKYQNLTDVESLSHLIHDIWFEFFSCINRPKFLSEDWKNLIKS) are Lumenal-facing. A helical transmembrane segment spans residues 178 to 198 (LSFTNLLKFSFKIFLAFFYKI). The Cytoplasmic segment spans residues 199 to 223 (LKFFDPNFKRIGAFWQWDDDKNFWR). Residues 224 to 244 (FLALFATVQILVTFFISNILN) form a helical membrane-spanning segment. Over 245 to 254 (WDSLAQGLGS) the chain is Lumenal. The 58-residue stretch at 252–309 (LGSIIGSLGLLVESLLPLPQIAILYKLKSVQGFKLILLVSWLCGDTLKITYLIFGAKN) folds into the PQ-loop domain. The chain crosses the membrane as a helical span at residues 255 to 275 (IIGSLGLLVESLLPLPQIAIL). At 276-283 (YKLKSVQG) the chain is on the cytoplasmic side. The chain crosses the membrane as a helical span at residues 284-306 (FKLILLVSWLCGDTLKITYLIFG). Residues 307-312 (AKNISA) are Lumenal-facing. Residues 313 to 335 (LFVIFALFQMSLDFYIGGQYIYY) form a helical membrane-spanning segment. Topologically, residues 336 to 405 (RYYYPKLRHQ…GKSQAQAVTL (70 aa)) are cytoplasmic. Positions 379–405 (LKQDSNDTSDSPQDDQVGKSQAQAVTL) are disordered. Positions 396 to 405 (GKSQAQAVTL) are enriched in polar residues.

As to quaternary structure, interacts with NEO1.

Its subcellular location is the golgi apparatus membrane. It is found in the late endosome membrane. In terms of biological role, phospholipid scramblase that transports phosphatidylserine (PS) and phosphatidylethalonamine (PE) bidirectionally from one leaflet to the other of the phospholipid bilayer to at least partially collapse the membrane asymmetry established by NEO1 and other flippases. The PS scramblase activity has been disputed. Functions in the trafficking pathway from endosomes to the trans-Golgi network (TGN). The protein is Scramblase ANY1 of Saccharomyces cerevisiae (strain ATCC 204508 / S288c) (Baker's yeast).